The primary structure comprises 406 residues: Calsequestrin-2 (406 aa).

Positions 1–19 (MKATCWILAGFCLLFCCKA) are cleaved as a signal peptide. A glycan (N-linked (GlcNAc...) asparagine) is linked at asparagine 335. The tract at residues 365–406 (VLSGKINTEDDDDDDDDDDDDDDDDDDDDDDDDDDDDDDDDD) is disordered. Positions 373-406 (EDDDDDDDDDDDDDDDDDDDDDDDDDDDDDDDDD) are enriched in acidic residues.

It belongs to the calsequestrin family. As to expression, skeletal and heart muscle.

The protein localises to the sarcoplasmic reticulum lumen. Calsequestrin is a high-capacity, moderate affinity, calcium-binding protein and thus acts as an internal calcium store in muscle. Calcium ions are bound by clusters of acidic residues at the protein surface, especially at the interface between subunits. Can bind around 60 Ca(2+) ions. Regulates the release of lumenal Ca(2+) via the calcium release channel RYR2; this plays an important role in triggering muscle contraction. Plays a role in excitation-contraction coupling in the heart and in regulating the rate of heart beats. This Gallus gallus (Chicken) protein is Calsequestrin-2 (CASQ2).